We begin with the raw amino-acid sequence, 156 residues long: Small ribosomal subunit protein uS7 (156 aa).

The protein belongs to the universal ribosomal protein uS7 family. Part of the 30S ribosomal subunit. Contacts proteins S9 and S11.

Its function is as follows. One of the primary rRNA binding proteins, it binds directly to 16S rRNA where it nucleates assembly of the head domain of the 30S subunit. Is located at the subunit interface close to the decoding center, probably blocks exit of the E-site tRNA. This chain is Small ribosomal subunit protein uS7, found in Maricaulis maris (strain MCS10) (Caulobacter maris).